Consider the following 500-residue polypeptide: UDP-N-acetylmuramoyl-L-alanyl-D-glutamate--2,6-diaminopimelate ligase (500 aa).

UDP-N-acetyl-alpha-D-muramoyl-L-alanyl-D-glutamate is bound at residue Ser38. 118–124 (GTNGKTS) is a binding site for ATP. UDP-N-acetyl-alpha-D-muramoyl-L-alanyl-D-glutamate contacts are provided by residues 160 to 161 (TT), Ser187, and Arg195. Lys227 carries the N6-carboxylysine modification. Meso-2,6-diaminopimelate is bound by residues Arg395, 419 to 422 (DNPR), Gly471, and Glu475. Residues 419–422 (DNPR) carry the Meso-diaminopimelate recognition motif motif.

This sequence belongs to the MurCDEF family. MurE subfamily. The cofactor is Mg(2+). Post-translationally, carboxylation is probably crucial for Mg(2+) binding and, consequently, for the gamma-phosphate positioning of ATP.

It is found in the cytoplasm. The catalysed reaction is UDP-N-acetyl-alpha-D-muramoyl-L-alanyl-D-glutamate + meso-2,6-diaminopimelate + ATP = UDP-N-acetyl-alpha-D-muramoyl-L-alanyl-gamma-D-glutamyl-meso-2,6-diaminopimelate + ADP + phosphate + H(+). It participates in cell wall biogenesis; peptidoglycan biosynthesis. In terms of biological role, catalyzes the addition of meso-diaminopimelic acid to the nucleotide precursor UDP-N-acetylmuramoyl-L-alanyl-D-glutamate (UMAG) in the biosynthesis of bacterial cell-wall peptidoglycan. In Leptospira borgpetersenii serovar Hardjo-bovis (strain L550), this protein is UDP-N-acetylmuramoyl-L-alanyl-D-glutamate--2,6-diaminopimelate ligase.